Consider the following 313-residue polypeptide: Fe-S cluster assembly protein dre2 (313 aa).

Disordered stretches follow at residues 1-25 and 151-187; these read MSIT…SQKR and GRKK…AQNN. An N-terminal SAM-like domain region spans residues 20–145; the sequence is NGSQKRNLLL…FEKPVQEAAV (126 aa). Positions 146 to 203 are linker; the sequence is PLKLGGRKKKDKTNGVNGVQNGVATNGASTNGVGMFDPAQNNDDELIDEDALLSDDDL. Over residues 159-177 the composition is skewed to polar residues; the sequence is NGVNGVQNGVATNGASTNG. 4 residues coordinate [2Fe-2S] cluster: cysteine 213, cysteine 225, cysteine 228, and cysteine 230. Residues 213–230 are fe-S binding site A; the sequence is CVPETAKKRRRPCKDCTC. [4Fe-4S] cluster-binding residues include cysteine 276, cysteine 279, cysteine 287, and cysteine 290. 2 consecutive short sequence motifs (cx2C motif) follow at residues 276 to 279 and 287 to 290; these read CNSC and CSSC. Positions 276–290 are fe-S binding site B; it reads CNSCSLGDAFRCSSC.

This sequence belongs to the anamorsin family. Monomer. Interacts with tah18. Interacts with mia40. [2Fe-2S] cluster is required as a cofactor. [4Fe-4S] cluster serves as cofactor.

Its subcellular location is the cytoplasm. It localises to the mitochondrion intermembrane space. Component of the cytosolic iron-sulfur (Fe-S) protein assembly (CIA) machinery required for the maturation of extramitochondrial Fe-S proteins. Part of an electron transfer chain functioning in an early step of cytosolic Fe-S biogenesis, facilitating the de novo assembly of a [4Fe-4S] cluster on the scaffold complex cfd1-nbp35. Electrons are transferred to dre2 from NADPH via the FAD- and FMN-containing protein tah18. Tah18-dre2 are also required for the assembly of the diferric tyrosyl radical cofactor of ribonucleotide reductase (RNR), probably by providing electrons for reduction during radical cofactor maturation in the catalytic small subunit rnr2. The polypeptide is Fe-S cluster assembly protein dre2 (Aspergillus oryzae (strain ATCC 42149 / RIB 40) (Yellow koji mold)).